Here is a 200-residue protein sequence, read N- to C-terminus: MQLNVNDAQAIEVSELTFGGEFNETLVHQAVVAYMAGGRQGSKQQKTRSDVSGGGKRPWRQKGTGRARAGTIRSPIWRGGGTTFAARPQDHSQKLNKKMYRAAMRSILAELVRTDRLVVVQDFAVETPKTKDLLGKLNNMSLTDVLIVSDAVDQNLYLAARNLPHVDVRDVQGSDPVSLIAYDKVLITVSAVKKFEELLG.

Positions Gly38–Ile72 are disordered.

The protein belongs to the universal ribosomal protein uL4 family. As to quaternary structure, part of the 50S ribosomal subunit.

In terms of biological role, one of the primary rRNA binding proteins, this protein initially binds near the 5'-end of the 23S rRNA. It is important during the early stages of 50S assembly. It makes multiple contacts with different domains of the 23S rRNA in the assembled 50S subunit and ribosome. Its function is as follows. Forms part of the polypeptide exit tunnel. The polypeptide is Large ribosomal subunit protein uL4 (Pseudomonas fluorescens (strain ATCC BAA-477 / NRRL B-23932 / Pf-5)).